Consider the following 150-residue polypeptide: Viral late gene transcription factor 2 (150 aa).

This sequence belongs to the orthopoxvirus VLTF-2/OPG126 family. In terms of assembly, interacts with the late transcription elongation factor VLTF-4/OPG110. Interacts with the late transcription factors VLTF-1/OPG093.

Functionally, acts with RNA polymerase to initiate transcription from late gene promoters. The chain is Viral late gene transcription factor 2 (OPG126) from Monkeypox virus.